A 626-amino-acid polypeptide reads, in one-letter code: Grainyhead-like protein 3 homolog (626 aa).

Residues 30-95 (EAWKTYLENP…QGKRYYHGME (66 aa)) are transcription activation. Positions 226–460 (SLKSDFEYTL…DLETPPVLFI (235 aa)) constitute a Grh/CP2 DB domain.

It belongs to the grh/CP2 family. Grainyhead subfamily. As to quaternary structure, homodimer, also forms heterodimers with GRHL1 and GRHL2. Interacts with LMO4. In terms of tissue distribution, expressed in brain, colon, pancreas, placenta and kidney. Isoform 1 is expressed in lung and tonsil. Isoform 2 is prostate-specific.

It localises to the nucleus. In terms of biological role, transcription factor playing important roles in primary neurulation and in the differentiation of stratified epithelia of both ectodermal and endodermal origin. Binds directly to the consensus DNA sequence 5'-AACCGGTT-3' acting as an activator and repressor on distinct target genes. xhibits functional redundancy with GRHL2 in epidermal morphogenetic events and epidermal wound repair. Exhibits functional redundancy with GRHL2 in epidermal morphogenetic events and epidermal wound repair but is essential to form the epidermal barrier with TGM3 as critical direct target gene among others. Despite being dispensable during normal epidermal homeostasis in the adulthood, is again required for barrier repair after immune-mediated epidermal damage, regulates distinct gene batteries in embryonic epidermal differentiation and adult epidermal barrier reformation after injury. Plays unique and cooperative roles with GRHL2 in establishing distinct zones of primary neurulation. Essential for spinal closure, functions cooperatively with GRHL2 in closure 2 (forebrain/midbrain boundary) and posterior neuropore closure. Also required for proper development of the oral periderm. No genetic interaction with GRHL3, no functional cooperativity due to diverse target gene selectivity. In Homo sapiens (Human), this protein is Grainyhead-like protein 3 homolog.